The sequence spans 331 residues: 2-oxoglutarate-dependent dioxygenase (331 aa).

Positions 186-292 (PACPLRLLHY…RYSVVFFMDG (107 aa)) constitute a Fe2OG dioxygenase domain. Fe cation is bound by residues histidine 214, aspartate 216, and histidine 272. Arginine 283 contributes to the 2-oxoglutarate binding site.

The protein belongs to the iron/ascorbate-dependent oxidoreductase family. The cofactor is Fe(2+).

Its pathway is mycotoxin biosynthesis. Its function is as follows. 2-oxoglutarate-dependent dioxygenase; part of the gene cluster that mediates the biosynthesis of the selective antifungal agent ascochitine, an o-quinone methide that plays a possible protective role against other microbial competitors in nature and is considered to be important for pathogenicity of legume-associated Didymella species. The pathway probably begins with the synthesis of a keto-aldehyde intermediate by the ascochitine non-reducing polyketide synthase pksAC from successive condensations of 4 malonyl-CoA units, presumably with a simple acetyl-CoA starter unit. Release of the keto-aldehyde intermediate is consistent with the presence of the C-terminal reductive release domain. The HR-PKS (orf7) probably makes a diketide starter unit which is passed to the non-reducing polyketide synthase pksAC for further extension, producing ascochital and ascochitine. The aldehyde dehydrogenase (orf1), the 2-oxoglutarate-dependent dioxygenase (orf3) and the dehydrogenase (orf9) are probably involved in subsequent oxidations of methyl groups to the carboxylic acid of the heterocyclic ring. The ascochitine gene cluster also includes a gene encoding a short peptide with a cupin domain (orf2) that is often found in secondary metabolite gene clusters and which function has still to be determined. This is 2-oxoglutarate-dependent dioxygenase from Didymella fabae (Leaf and pod spot disease fungus).